A 132-amino-acid polypeptide reads, in one-letter code: SH2 domain-containing protein 1B2 (132 aa).

Positions 5–101 constitute an SH2 domain; it reads YYHGCLTKRE…GMVVHLSNPI (97 aa).

In terms of assembly, interacts with SLAMF1 (phosphorylated). Interacts with CD244. Interacts with Src kinases HCK, LYN, FYN, FGR and LCK (via kinase domains). In terms of tissue distribution, expressed in spleen. Expressed in macrophages, CD8(+) T-Cells and NK cells. Conflictingly found only in NK cells.

It localises to the cytoplasm. Cytoplasmic adapter regulating receptors of the signaling lymphocytic activation molecule (SLAM) family. In SLAM signaling may cooperate with Sh2d1a/SAP. Plays a role in regulation of effector functions of natural killer (NK) cells by controlling signal transduction through Cd244/2b4. However, conflicting results are reported which may reflect the use of different strain backgrounds. Proposed to act as an inhibitor of Cd244-mediated NK cell function including cytotoxicity and IFN-gamma production, the latter found also by triggering Klra4 and Klrk1 next to Cd244. Seems to positively regulate Cd244- and Cd84-dependent NK cell functions implicating Cd244-mediated phosphorylation of Vav1. The chain is SH2 domain-containing protein 1B2 (Sh2d1b2) from Mus musculus (Mouse).